Here is a 623-residue protein sequence, read N- to C-terminus: Glutamine--fructose-6-phosphate aminotransferase [isomerizing] (623 aa).

The Nucleophile; for GATase activity role is filled by Cys-2. One can recognise a Glutamine amidotransferase type-2 domain in the interval 2 to 228; it reads CGIVGYIGQA…NDQVVTITAD (227 aa). SIS domains lie at 295–435 and 468–613; these read IDES…LRGN and LGRS…VDQP. The active-site For Fru-6P isomerization activity is the Lys-618.

In terms of assembly, homodimer.

It localises to the cytoplasm. It carries out the reaction D-fructose 6-phosphate + L-glutamine = D-glucosamine 6-phosphate + L-glutamate. Its function is as follows. Catalyzes the first step in hexosamine metabolism, converting fructose-6P into glucosamine-6P using glutamine as a nitrogen source. This chain is Glutamine--fructose-6-phosphate aminotransferase [isomerizing], found in Corynebacterium efficiens (strain DSM 44549 / YS-314 / AJ 12310 / JCM 11189 / NBRC 100395).